Here is a 101-residue protein sequence, read N- to C-terminus: Protein S100-A4 (101 aa).

Lys7 carries the post-translational modification N6-acetyllysine. EF-hand domains lie at 12 to 47 and 50 to 85; these read MVST…SFLG and TDEA…VAMM. The Ca(2+) site is built by Lys28 and Glu33. Lys35 carries the N6-acetyllysine modification. Residues Asp63, Asn65, Asp67, Glu69, and Glu74 each coordinate Ca(2+).

Belongs to the S-100 family. In terms of assembly, homodimer. Interacts with PPFIBP1 in a calcium-dependent mode. Interacts with PGLYRP1; this complex acts as a chemoattractant that promotes lymphocyte movement. Interacts with MYH9; this interaction increases cell motility. Interacts with Annexin 2/ANXA2. Interacts with TP53; this interaction promotes TP53 degradation. Interacts with CCR5 and CXCR3. Interacts with FCGR3A; this interaction inhibits PKC-dependent phosphorylation of FCGR3A.

The protein resides in the secreted. Its subcellular location is the nucleus. The protein localises to the cytoplasm. Its function is as follows. Calcium-binding protein that plays a role in various cellular processes including motility, angiogenesis, cell differentiation, apoptosis, and autophagy. Increases cell motility and invasiveness by interacting with non-muscle myosin heavy chain (NMMHC) IIA/MYH9. Mechanistically, promotes filament depolymerization and increases the amount of soluble myosin-IIA, resulting in the formation of stable protrusions facilitating chemotaxis. Also modulates the pro-apoptotic function of TP53 by binding to its C-terminal transactivation domain within the nucleus and reducing its protein levels. Within the extracellular space, stimulates cytokine production including granulocyte colony-stimulating factor and CCL24 from T-lymphocytes. In addition, stimulates T-lymphocyte chemotaxis by acting as a chemoattractant complex with PGLYRP1 that promotes lymphocyte migration via CCR5 and CXCR3 receptors. The polypeptide is Protein S100-A4 (S100A4) (Canis lupus familiaris (Dog)).